A 367-amino-acid chain; its full sequence is Glutamate 5-kinase (367 aa).

K8 provides a ligand contact to ATP. Positions 49, 136, and 148 each coordinate substrate. ATP-binding positions include 168-169 (TD) and 210-216 (TGGMVTK). A PUA domain is found at 275–353 (AGKLYLDEGA…REISTILGYA (79 aa)).

Belongs to the glutamate 5-kinase family.

It localises to the cytoplasm. The enzyme catalyses L-glutamate + ATP = L-glutamyl 5-phosphate + ADP. Its pathway is amino-acid biosynthesis; L-proline biosynthesis; L-glutamate 5-semialdehyde from L-glutamate: step 1/2. In terms of biological role, catalyzes the transfer of a phosphate group to glutamate to form L-glutamate 5-phosphate. The chain is Glutamate 5-kinase from Nostoc punctiforme (strain ATCC 29133 / PCC 73102).